Reading from the N-terminus, the 346-residue chain is Phosphoribosylformylglycinamidine cyclo-ligase (346 aa).

It belongs to the AIR synthase family.

Its subcellular location is the cytoplasm. It catalyses the reaction 2-formamido-N(1)-(5-O-phospho-beta-D-ribosyl)acetamidine + ATP = 5-amino-1-(5-phospho-beta-D-ribosyl)imidazole + ADP + phosphate + H(+). Its pathway is purine metabolism; IMP biosynthesis via de novo pathway; 5-amino-1-(5-phospho-D-ribosyl)imidazole from N(2)-formyl-N(1)-(5-phospho-D-ribosyl)glycinamide: step 2/2. The sequence is that of Phosphoribosylformylglycinamidine cyclo-ligase from Prochlorococcus marinus (strain NATL2A).